A 303-amino-acid chain; its full sequence is Protoheme IX farnesyltransferase (303 aa).

Transmembrane regions (helical) follow at residues Met25–Leu45, Ile54–Leu74, Leu118–Val138, Trp151–Ile171, Leu177–Leu197, Leu230–Leu250, and Phe280–Ile300.

It belongs to the UbiA prenyltransferase family. Protoheme IX farnesyltransferase subfamily. Interacts with CtaA.

Its subcellular location is the cell membrane. It carries out the reaction heme b + (2E,6E)-farnesyl diphosphate + H2O = Fe(II)-heme o + diphosphate. It participates in porphyrin-containing compound metabolism; heme O biosynthesis; heme O from protoheme: step 1/1. In terms of biological role, converts heme B (protoheme IX) to heme O by substitution of the vinyl group on carbon 2 of heme B porphyrin ring with a hydroxyethyl farnesyl side group. In Staphylococcus saprophyticus subsp. saprophyticus (strain ATCC 15305 / DSM 20229 / NCIMB 8711 / NCTC 7292 / S-41), this protein is Protoheme IX farnesyltransferase.